We begin with the raw amino-acid sequence, 235 residues long: ATP-dependent dethiobiotin synthetase BioD (235 aa).

12–17 (GVGKTF) is a binding site for ATP. Thr-16 is a binding site for Mg(2+). Lys-37 is a catalytic residue. Ser-41 is a binding site for substrate. Residues Asp-51, 112 to 115 (EGAG), and 202 to 204 (PKL) contribute to the ATP site. Mg(2+) is bound by residues Asp-51 and Glu-112.

The protein belongs to the dethiobiotin synthetase family. As to quaternary structure, homodimer. It depends on Mg(2+) as a cofactor.

Its subcellular location is the cytoplasm. The catalysed reaction is (7R,8S)-7,8-diammoniononanoate + CO2 + ATP = (4R,5S)-dethiobiotin + ADP + phosphate + 3 H(+). It participates in cofactor biosynthesis; biotin biosynthesis; biotin from 7,8-diaminononanoate: step 1/2. Functionally, catalyzes a mechanistically unusual reaction, the ATP-dependent insertion of CO2 between the N7 and N8 nitrogen atoms of 7,8-diaminopelargonic acid (DAPA, also called 7,8-diammoniononanoate) to form a ureido ring. This chain is ATP-dependent dethiobiotin synthetase BioD, found in Bacillus licheniformis (strain ATCC 14580 / DSM 13 / JCM 2505 / CCUG 7422 / NBRC 12200 / NCIMB 9375 / NCTC 10341 / NRRL NRS-1264 / Gibson 46).